Consider the following 370-residue polypeptide: Peptidoglycan glycosyltransferase MrdB (370 aa).

9 consecutive transmembrane segments (helical) span residues 20–40 (MLLI…SASG), 50–70 (IGQI…PPRV), 75–95 (APYL…FGAI), 136–156 (SLKN…LVAA), 160–180 (LGTS…SGLS), 183–203 (LIGV…FFLM), 263–283 (FIFA…LLAL), 312–332 (LILF…LPVV), and 336–356 (LPLV…FGIV).

It belongs to the SEDS family. MrdB/RodA subfamily.

It localises to the cell inner membrane. It catalyses the reaction [GlcNAc-(1-&gt;4)-Mur2Ac(oyl-L-Ala-gamma-D-Glu-L-Lys-D-Ala-D-Ala)](n)-di-trans,octa-cis-undecaprenyl diphosphate + beta-D-GlcNAc-(1-&gt;4)-Mur2Ac(oyl-L-Ala-gamma-D-Glu-L-Lys-D-Ala-D-Ala)-di-trans,octa-cis-undecaprenyl diphosphate = [GlcNAc-(1-&gt;4)-Mur2Ac(oyl-L-Ala-gamma-D-Glu-L-Lys-D-Ala-D-Ala)](n+1)-di-trans,octa-cis-undecaprenyl diphosphate + di-trans,octa-cis-undecaprenyl diphosphate + H(+). The protein operates within cell wall biogenesis; peptidoglycan biosynthesis. Functionally, peptidoglycan polymerase that is essential for cell wall elongation. This Escherichia coli O157:H7 protein is Peptidoglycan glycosyltransferase MrdB.